Reading from the N-terminus, the 211-residue chain is N-(5'-phosphoribosyl)anthranilate isomerase (211 aa).

It belongs to the TrpF family.

It carries out the reaction N-(5-phospho-beta-D-ribosyl)anthranilate = 1-(2-carboxyphenylamino)-1-deoxy-D-ribulose 5-phosphate. The protein operates within amino-acid biosynthesis; L-tryptophan biosynthesis; L-tryptophan from chorismate: step 3/5. This Zymomonas mobilis subsp. pomaceae (strain ATCC 29192 / DSM 22645 / JCM 10191 / CCUG 17912 / NBRC 13757 / NCIMB 11200 / NRRL B-4491 / Barker I) protein is N-(5'-phosphoribosyl)anthranilate isomerase.